The following is a 576-amino-acid chain: Threonine dehydratase, mitochondrial (576 aa).

An N6-(pyridoxal phosphate)lysine modification is found at lysine 109. ACT-like domains lie at 393–473 (VFML…DISD) and 495–566 (RIIS…DETD).

The protein belongs to the serine/threonine dehydratase family. Homotetramer. The cofactor is pyridoxal 5'-phosphate.

The protein resides in the mitochondrion. It catalyses the reaction L-threonine = 2-oxobutanoate + NH4(+). The protein operates within amino-acid biosynthesis; L-isoleucine biosynthesis; 2-oxobutanoate from L-threonine: step 1/1. With respect to regulation, isoleucine allosterically inhibits while valine allosterically activates this enzyme. This Saccharomyces cerevisiae (strain ATCC 204508 / S288c) (Baker's yeast) protein is Threonine dehydratase, mitochondrial (ILV1).